Consider the following 494-residue polypeptide: ETS translocation variant 4 (494 aa).

Disordered regions lie at residues 82–113 (ENSV…SHKQ) and 139–201 (AGGS…SGSA). Residues 100–113 (SPGSDPSQSCSHKQ) are compositionally biased toward polar residues. The segment covering 176 to 187 (SSSQSHACHSHS) has biased composition (low complexity). The span at 188 to 197 (YPMNPSSRFP) shows a compositional bias: polar residues. The segment at residues 350 to 430 (LQLWQFLVAL…AGERYVYKFV (81 aa)) is a DNA-binding region (ETS).

The protein belongs to the ETS family. Phosphorylated. In the embryo, expressed ubiquitously until the late blastula stage, in the marginal zone of gastrula stages, in the presumptive forebrain and hindbrain and in the trunk region of early somite stages. In later stages, also expressed in Rohon-Beard neurons, epiphysis, lateral line placodes, pectoral fin buds, developing lens and heart.

Its subcellular location is the nucleus. Functionally, transcriptional activator that binds to the (5'-CCGGA[AT]-3') motif. May control the acquisition of specific cell fates at an early stage during development of the somites and nervous system. May mediate the cellular effects of the fibroblast growth factors on embryogenesis. This chain is ETS translocation variant 4 (etv4), found in Danio rerio (Zebrafish).